The sequence spans 247 residues: UPF0309 protein lin2794 (247 aa).

One can recognise an SIS domain in the interval 31-214 (VAESIENDGV…EKMVNDNFTP (184 aa)).

Belongs to the UPF0309 family.

This is UPF0309 protein lin2794 from Listeria innocua serovar 6a (strain ATCC BAA-680 / CLIP 11262).